Here is a 483-residue protein sequence, read N- to C-terminus: tRNA sulfurtransferase (483 aa).

The 105-residue stretch at 62–166 (PEICDALTRI…QDKLILVKAR (105 aa)) folds into the THUMP domain. Residues 184–185 (LI), Lys266, Gly288, and Gln297 each bind ATP. A disulfide bridge links Cys345 with Cys457. Residues 405–483 (LADTDVLLDI…GYTNVKVYRP (79 aa)) enclose the Rhodanese domain. Cys457 acts as the Cysteine persulfide intermediate in catalysis.

The protein belongs to the ThiI family.

The protein localises to the cytoplasm. It carries out the reaction [ThiI sulfur-carrier protein]-S-sulfanyl-L-cysteine + a uridine in tRNA + 2 reduced [2Fe-2S]-[ferredoxin] + ATP + H(+) = [ThiI sulfur-carrier protein]-L-cysteine + a 4-thiouridine in tRNA + 2 oxidized [2Fe-2S]-[ferredoxin] + AMP + diphosphate. It catalyses the reaction [ThiS sulfur-carrier protein]-C-terminal Gly-Gly-AMP + S-sulfanyl-L-cysteinyl-[cysteine desulfurase] + AH2 = [ThiS sulfur-carrier protein]-C-terminal-Gly-aminoethanethioate + L-cysteinyl-[cysteine desulfurase] + A + AMP + 2 H(+). It functions in the pathway cofactor biosynthesis; thiamine diphosphate biosynthesis. Catalyzes the ATP-dependent transfer of a sulfur to tRNA to produce 4-thiouridine in position 8 of tRNAs, which functions as a near-UV photosensor. Also catalyzes the transfer of sulfur to the sulfur carrier protein ThiS, forming ThiS-thiocarboxylate. This is a step in the synthesis of thiazole, in the thiamine biosynthesis pathway. The sulfur is donated as persulfide by IscS. In Yersinia pseudotuberculosis serotype IB (strain PB1/+), this protein is tRNA sulfurtransferase.